Here is a 385-residue protein sequence, read N- to C-terminus: 1-deoxy-D-xylulose 5-phosphate reductoisomerase (385 aa).

NADPH contacts are provided by T10, G11, S12, I13, and N124. A 1-deoxy-D-xylulose 5-phosphate-binding site is contributed by K125. An NADPH-binding site is contributed by E126. D150 contributes to the Mn(2+) binding site. 1-deoxy-D-xylulose 5-phosphate contacts are provided by S151, E152, S176, and H199. E152 provides a ligand contact to Mn(2+). G205 serves as a coordination point for NADPH. 1-deoxy-D-xylulose 5-phosphate-binding residues include S212, N217, K218, and E221. E221 serves as a coordination point for Mn(2+).

This sequence belongs to the DXR family. Mg(2+) serves as cofactor. Requires Mn(2+) as cofactor.

The enzyme catalyses 2-C-methyl-D-erythritol 4-phosphate + NADP(+) = 1-deoxy-D-xylulose 5-phosphate + NADPH + H(+). Its pathway is isoprenoid biosynthesis; isopentenyl diphosphate biosynthesis via DXP pathway; isopentenyl diphosphate from 1-deoxy-D-xylulose 5-phosphate: step 1/6. Catalyzes the NADPH-dependent rearrangement and reduction of 1-deoxy-D-xylulose-5-phosphate (DXP) to 2-C-methyl-D-erythritol 4-phosphate (MEP). In Clostridium kluyveri (strain NBRC 12016), this protein is 1-deoxy-D-xylulose 5-phosphate reductoisomerase.